The chain runs to 183 residues: Large ribosomal subunit protein bL17 (183 aa).

Basic and acidic residues predominate over residues 130–150 (GTKFAKDEKAKAEATEAKAEE). The tract at residues 130–183 (GTKFAKDEKAKAEATEAKAEETTETTESTEAESTEAPAEEAKAEDTAAEKKDES) is disordered. A compositionally biased stretch (acidic residues) spans 151-162 (TTETTESTEAES). Positions 168–183 (EEAKAEDTAAEKKDES) are enriched in basic and acidic residues.

Belongs to the bacterial ribosomal protein bL17 family. As to quaternary structure, part of the 50S ribosomal subunit. Contacts protein L32.

This chain is Large ribosomal subunit protein bL17, found in Saccharopolyspora erythraea (strain ATCC 11635 / DSM 40517 / JCM 4748 / NBRC 13426 / NCIMB 8594 / NRRL 2338).